We begin with the raw amino-acid sequence, 242 residues long: Biosynthetic peptidoglycan transglycosylase (242 aa).

Residues 19–39 traverse the membrane as a helical segment; sequence LMVVLAVFWGGGIALFSVAPV.

It belongs to the glycosyltransferase 51 family.

The protein resides in the cell inner membrane. The enzyme catalyses [GlcNAc-(1-&gt;4)-Mur2Ac(oyl-L-Ala-gamma-D-Glu-L-Lys-D-Ala-D-Ala)](n)-di-trans,octa-cis-undecaprenyl diphosphate + beta-D-GlcNAc-(1-&gt;4)-Mur2Ac(oyl-L-Ala-gamma-D-Glu-L-Lys-D-Ala-D-Ala)-di-trans,octa-cis-undecaprenyl diphosphate = [GlcNAc-(1-&gt;4)-Mur2Ac(oyl-L-Ala-gamma-D-Glu-L-Lys-D-Ala-D-Ala)](n+1)-di-trans,octa-cis-undecaprenyl diphosphate + di-trans,octa-cis-undecaprenyl diphosphate + H(+). Its pathway is cell wall biogenesis; peptidoglycan biosynthesis. Peptidoglycan polymerase that catalyzes glycan chain elongation from lipid-linked precursors. This Escherichia coli (strain SMS-3-5 / SECEC) protein is Biosynthetic peptidoglycan transglycosylase.